Here is a 280-residue protein sequence, read N- to C-terminus: Bifunctional protein FolD (280 aa).

NADP(+) is bound by residues 166-168 (GRS) and serine 191.

Belongs to the tetrahydrofolate dehydrogenase/cyclohydrolase family. As to quaternary structure, homodimer.

It carries out the reaction (6R)-5,10-methylene-5,6,7,8-tetrahydrofolate + NADP(+) = (6R)-5,10-methenyltetrahydrofolate + NADPH. The catalysed reaction is (6R)-5,10-methenyltetrahydrofolate + H2O = (6R)-10-formyltetrahydrofolate + H(+). It participates in one-carbon metabolism; tetrahydrofolate interconversion. Catalyzes the oxidation of 5,10-methylenetetrahydrofolate to 5,10-methenyltetrahydrofolate and then the hydrolysis of 5,10-methenyltetrahydrofolate to 10-formyltetrahydrofolate. The protein is Bifunctional protein FolD of Cellvibrio japonicus (strain Ueda107) (Pseudomonas fluorescens subsp. cellulosa).